The following is an 876-amino-acid chain: Leucine--tRNA ligase (876 aa).

Residues Pro-43–His-53 carry the 'HIGH' region motif. The 'KMSKS' region motif lies at Lys-632–Ser-636. Lys-635 is a binding site for ATP.

It belongs to the class-I aminoacyl-tRNA synthetase family.

It is found in the cytoplasm. The enzyme catalyses tRNA(Leu) + L-leucine + ATP = L-leucyl-tRNA(Leu) + AMP + diphosphate. This is Leucine--tRNA ligase from Agrobacterium fabrum (strain C58 / ATCC 33970) (Agrobacterium tumefaciens (strain C58)).